Reading from the N-terminus, the 276-residue chain is Borealin (276 aa).

The disordered stretch occupies residues 111–158 (KEAKSSANSEDENMAPLKSTMKKKKASKKAPSTSKKPRTLSISKQGGT).

This sequence belongs to the borealin family. As to quaternary structure, component of the CPC complex.

It localises to the nucleus. The protein resides in the chromosome. It is found in the centromere. Its subcellular location is the cytoplasm. The protein localises to the cytoskeleton. It localises to the spindle. Component of the chromosomal passenger complex (CPC), a complex that acts as a key regulator of mitosis. The CPC complex has essential functions at the centromere in ensuring correct chromosome alignment and segregation and is required for chromatin-induced microtubule stabilization and spindle assembly. In Danio rerio (Zebrafish), this protein is Borealin (cdca8).